We begin with the raw amino-acid sequence, 332 residues long: uncharacterized protein (332 aa).

The chain crosses the membrane as a helical span at residues 27–47; it reads CAIVFLCVLLILPFLSCCTSL.

The protein resides in the membrane. This is an uncharacterized protein from Treponema pallidum (strain Nichols).